A 72-amino-acid chain; its full sequence is MAKDDVIEVEGKVIDTMPNAMFTVELENGHQILATVSGKIRKNYIRILAGDRVTVEMSPYDLTRGRITYRFK.

One can recognise an S1-like domain in the interval 1 to 72 (MAKDDVIEVE…TRGRITYRFK (72 aa)).

It belongs to the IF-1 family. As to quaternary structure, component of the 30S ribosomal translation pre-initiation complex which assembles on the 30S ribosome in the order IF-2 and IF-3, IF-1 and N-formylmethionyl-tRNA(fMet); mRNA recruitment can occur at any time during PIC assembly.

It is found in the cytoplasm. Functionally, one of the essential components for the initiation of protein synthesis. Stabilizes the binding of IF-2 and IF-3 on the 30S subunit to which N-formylmethionyl-tRNA(fMet) subsequently binds. Helps modulate mRNA selection, yielding the 30S pre-initiation complex (PIC). Upon addition of the 50S ribosomal subunit IF-1, IF-2 and IF-3 are released leaving the mature 70S translation initiation complex. The chain is Translation initiation factor IF-1 from Streptococcus gordonii (strain Challis / ATCC 35105 / BCRC 15272 / CH1 / DL1 / V288).